The chain runs to 91 residues: Small ribosomal subunit protein uS15 (91 aa).

This sequence belongs to the universal ribosomal protein uS15 family. In terms of assembly, part of the 30S ribosomal subunit. Forms a bridge to the 50S subunit in the 70S ribosome, contacting the 23S rRNA.

Its function is as follows. One of the primary rRNA binding proteins, it binds directly to 16S rRNA where it helps nucleate assembly of the platform of the 30S subunit by binding and bridging several RNA helices of the 16S rRNA. In terms of biological role, forms an intersubunit bridge (bridge B4) with the 23S rRNA of the 50S subunit in the ribosome. This is Small ribosomal subunit protein uS15 from Rickettsia typhi (strain ATCC VR-144 / Wilmington).